A 787-amino-acid chain; its full sequence is Dolichyl-diphosphooligosaccharide--protein glycosyltransferase subunit STT3A (787 aa).

Topologically, residues 1-18 are cytoplasmic; sequence MAEPESSTAAAGGSRLRN. A helical transmembrane segment spans residues 19–39; sequence ACGGVLCAFTLLLIGVLAFSI. The Lumenal portion of the chain corresponds to 40–125; it reads RLFSVIKYES…LSVETVCVFT (86 aa). Residues 53–55 carry the DXD motif 1 motif; sequence EFD. Asp-55 is a Mn(2+) binding site. A helical membrane pass occupies residues 126 to 144; it reads APIFSANASWATYLLTKEA. Residues 145 to 146 lie on the Cytoplasmic side of the membrane; sequence KG. The chain crosses the membrane as a helical span at residues 147-164; the sequence is TGAGLMAAAILAMVPSYI. At 165 to 175 the chain is on the lumenal side; that stretch reads SRSVAGSYDNE. Residues Asp-173 and Glu-175 each coordinate Mn(2+). The short motif at 173-175 is the DXD motif 2 element; sequence DNE. A helical membrane pass occupies residues 176–195; the sequence is AVAIFALIFTFYLYVKTLNT. Over 196 to 197 the chain is Cytoplasmic; that stretch reads GS. The helical transmembrane segment at 198–212 threads the bilayer; it reads LFYATLNALSYFYMV. Topologically, residues 213–217 are lumenal; sequence CSWGG. A helical transmembrane segment spans residues 218–234; the sequence is YTFIINLIPIHVLLCIV. The Cytoplasmic segment spans residues 235–239; the sequence is TGRYS. A helical transmembrane segment spans residues 240-265; that stretch reads SRLYIAYAPLVILGTLLAALVPVVGF. At 266–273 the chain is on the lumenal side; it reads NAVMTSEH. A helical transmembrane segment spans residues 274-293; sequence FASFLVFIILHVVALVYYIK. Residues 294-306 are Cytoplasmic-facing; sequence GLLTPRLFKVAMT. Residues 307–327 traverse the membrane as a helical segment; the sequence is LVITVGLAVCFAVIAILIALV. The Lumenal segment spans residues 328–365; sequence ASSPTKGWSGRSLSLLDPTYASKYIPIIASVSEHQPPT. The SVSE motif motif lies at 357–360; it reads SVSE. A helical transmembrane segment spans residues 366-388; that stretch reads WPSYFMDINVLAFLIPAGIISCF. The Cytoplasmic segment spans residues 389–394; it reads LPLSDA. Residues 395-411 traverse the membrane as a helical segment; it reads SSFVVLYLVTAVYFSGV. Topologically, residues 412–415 are lumenal; it reads MVRL. Arg-414 is a dolichyl diphosphooligosaccharide binding site. The helical transmembrane segment at 416-437 threads the bilayer; the sequence is MLVLAPAACILSGIALSEAFDV. The Cytoplasmic segment spans residues 438–525; it reads LTRSVKYQLS…KLLVLPMEAS (88 aa). Residues 453-475 show a composition bias toward low complexity; it reads SPAASGDSSAESSSASTVSTNSA. The disordered stretch occupies residues 453 to 507; that stretch reads SPAASGDSSAESSSASTVSTNSAKNETRPEKTETAPKEKPSKKNRKKEKEVAESV. A compositionally biased stretch (basic and acidic residues) spans 477–504; sequence NETRPEKTETAPKEKPSKKNRKKEKEVA. Residues 526 to 546 traverse the membrane as a helical segment; the sequence is VLGILLLIVLGGFYVVHCVWA. At 547–787 the chain is on the lumenal side; it reads AAEAYSAPSI…AAGRKKNPWQ (241 aa). An interacts with target acceptor peptide in protein substrate region spans residues 592–594; sequence WWD. Positions 592–596 match the WWDYG motif motif; the sequence is WWDYG. A dolichyl diphosphooligosaccharide-binding site is contributed by Tyr-597. Asn-604 and Asn-611 each carry an N-linked (GlcNAc...) asparagine glycan. Asn-615 is a glycosylation site (N-linked (GlcNAc...) (high mannose) asparagine). The short motif at 659–666 is the DK motif element; it reads DINKFLWM. Positions 759–769 are enriched in basic residues; sequence RVRGKLKKLKS. The tract at residues 759–787 is disordered; it reads RVRGKLKKLKSGSKASSTNAAGRKKNPWQ.

The protein belongs to the STT3 family. As to quaternary structure, component of the oligosaccharyltransferase (OST) complex. Mg(2+) serves as cofactor. Requires Mn(2+) as cofactor.

It is found in the endoplasmic reticulum membrane. The enzyme catalyses a di-trans,poly-cis-dolichyl diphosphooligosaccharide + L-asparaginyl-[protein] = N(4)-(oligosaccharide-(1-&gt;4)-N-acetyl-beta-D-glucosaminyl-(1-&gt;4)-N-acetyl-beta-D-glucosaminyl)-L-asparaginyl-[protein] + a di-trans,poly-cis-dolichyl diphosphate + H(+). Its pathway is protein modification; protein glycosylation. In terms of biological role, catalytic subunit of the oligosaccharyl transferase (OST) complex that catalyzes the initial transfer of a defined glycan (Glc(3)Man(9)GlcNAc(2) in eukaryotes) from the lipid carrier dolichol-pyrophosphate to an asparagine residue within an Asn-X-Ser/Thr consensus motif in nascent polypeptide chains, the first step in protein N-glycosylation. N-glycosylation occurs cotranslationally and the complex associates with the Sec61 complex at the channel-forming translocon complex that mediates protein translocation across the endoplasmic reticulum (ER). All subunits are required for a maximal enzyme activity. This subunit contains the active site and the acceptor peptide and donor lipid-linked oligosaccharide (LLO) binding pockets. This is Dolichyl-diphosphooligosaccharide--protein glycosyltransferase subunit STT3A (STT3A) from Oryza sativa subsp. japonica (Rice).